Here is a 90-residue protein sequence, read N- to C-terminus: Cell division topological specificity factor (90 aa).

This sequence belongs to the MinE family.

Functionally, prevents the cell division inhibition by proteins MinC and MinD at internal division sites while permitting inhibition at polar sites. This ensures cell division at the proper site by restricting the formation of a division septum at the midpoint of the long axis of the cell. In Clostridium perfringens (strain SM101 / Type A), this protein is Cell division topological specificity factor.